The following is a 743-amino-acid chain: tRNA(Met) cytidine acetyltransferase TmcA (743 aa).

Residues Q216, 241–250, and R390 contribute to the ATP site; that span reads GRGKSASIGL. Residues 420-604 enclose the N-acetyltransferase domain; that stretch reads LKIEDVSQEE…YSVIVIRALS (185 aa). Acetyl-CoA-binding positions include 531–533 and 538–544; these read IAV and QGKGIGS.

This sequence belongs to the RNA cytidine acetyltransferase family. TmcA subfamily.

The protein localises to the cytoplasm. It catalyses the reaction cytidine(34) in elongator tRNA(Met) + acetyl-CoA + ATP + H2O = N(4)-acetylcytidine(34) in elongator tRNA(Met) + ADP + phosphate + CoA + H(+). Its function is as follows. Catalyzes the formation of N(4)-acetylcytidine (ac(4)C) at the wobble position of tRNA(Met), by using acetyl-CoA as an acetyl donor and ATP (or GTP). This chain is tRNA(Met) cytidine acetyltransferase TmcA, found in Saccharolobus islandicus (strain Y.G.57.14 / Yellowstone #1) (Sulfolobus islandicus).